Reading from the N-terminus, the 100-residue chain is Urease subunit gamma (100 aa).

It belongs to the urease gamma subunit family. In terms of assembly, heterotrimer of UreA (gamma), UreB (beta) and UreC (alpha) subunits. Three heterotrimers associate to form the active enzyme.

The protein localises to the cytoplasm. It catalyses the reaction urea + 2 H2O + H(+) = hydrogencarbonate + 2 NH4(+). The protein operates within nitrogen metabolism; urea degradation; CO(2) and NH(3) from urea (urease route): step 1/1. The protein is Urease subunit gamma of Methylocella silvestris (strain DSM 15510 / CIP 108128 / LMG 27833 / NCIMB 13906 / BL2).